The primary structure comprises 254 residues: Ciliary microtubule associated protein 1A (254 aa).

STPGR repeat units follow at residues 180-205 (PGPA…MAAR) and 216-241 (PGPG…FGIK). Residues 207 to 228 (EPPGDKTLKPGPGAHSPEKVTL) form a disordered region.

Belongs to the CIMAP family. Microtubule inner protein component of sperm flagellar doublet microtubules. In terms of tissue distribution, testis-specific (at protein level). Expression restricted to the germ cell fraction, absent in somatic cell fractions such as Sertoli and Leydig cells. Expression detected in the third week postpartum (23 days) after haploid germ cells developed, expression increased with age. Expressed in the tails of elongated spermatids sticking out toward the tubular lumen, and in cytoplasmic droplets still attached to the spermatid tail membrane. Expressed in the tails of mature sperm, from the connecting piece proximal to the head, along the middle and principal pieces, down to the distal end piece.

It localises to the cytoplasm. The protein localises to the cytoskeleton. The protein resides in the flagellum axoneme. Outer dense fibers are filamentous structures located on the outside of the axoneme in the midpiece and principal piece of the mammalian sperm tail. May help to maintain the passive elastic structures and elastic recoil of the sperm tail. In Mus musculus (Mouse), this protein is Ciliary microtubule associated protein 1A (Cimap1a).